Here is a 552-residue protein sequence, read N- to C-terminus: Putative transport protein APL_0966 (552 aa).

Transmembrane regions (helical) follow at residues 4 to 24 (IAII…IGHI), 29 to 49 (VGLG…CTHL), 65 to 85 (FGLI…FFAS), 95 to 115 (GFAV…HKLF), and 161 to 181 (IAYP…RIIF). 2 consecutive RCK C-terminal domains span residues 190–275 (QEFD…ILGE) and 277–360 (ADVS…IIGD). Helical transmembrane passes span 370–390 (MLPI…PLYI), 402–424 (AGGP…LYWF), 438–458 (IVLF…DTLL), 463–483 (LAWM…TGFV), 492–512 (YLSL…LAFA), and 529–549 (VYPL…ILLW).

Belongs to the AAE transporter (TC 2.A.81) family. YidE subfamily.

The protein localises to the cell membrane. In Actinobacillus pleuropneumoniae serotype 5b (strain L20), this protein is Putative transport protein APL_0966.